The following is a 184-amino-acid chain: Cathelicidin-related peptide Pt_CRAMP2 (184 aa).

Residues 1–22 (MDGFFWKTWLVVAALAIGGTSS) form the signal peptide. Positions 23–150 (LPHKPLTYEE…EDEKDQPRRV (128 aa)) are excised as a propeptide. 2 disulfides stabilise this stretch: C81-C92 and C103-C120. Acidic residues predominate over residues 125–144 (EDEEQNQEEEEEEEKEEDEK). A disordered region spans residues 125 to 147 (EDEEQNQEEEEEEEKEEDEKDQP).

The protein belongs to the cathelicidin family. Expressed by the venom gland.

The protein localises to the secreted. The protein resides in the target cell membrane. Functionally, potent antimicrobial peptide against most of Gram-negative bacteria, some Gram-positive bacteria (Bacillus) and some fungi (C.albicans, P.pastoris, A.terreus, A.nidulans, and C.globosum). Adopts an amphipathic alpha helical conformation, that may allow to partition into the target membrane. No hemolytic and cytotoxic activities have been observed on mammalian cells. This is Cathelicidin-related peptide Pt_CRAMP2 from Pseudonaja textilis (Eastern brown snake).